The following is a 937-amino-acid chain: Proprotein convertase subtilisin/kexin type 6 (937 aa).

A compositionally biased stretch (pro residues) spans 1–16; the sequence is MPPRAPPAPGPRPPPR. The disordered stretch occupies residues 1–22; it reads MPPRAPPAPGPRPPPRAAGRHG. The signal sequence occupies residues 1–45; that stretch reads MPPRAPPAPGPRPPPRAAGRHGLSPLAPRPWRWLLLLALPAVCSA. The propeptide occupies 46–132; the sequence is LPPPRPVYTN…QQEVKRRVKR (87 aa). A Peptidase S8 domain is found at 149 to 468; the sequence is MWYMHCADKN…FGLVDAEALV (320 aa). Active-site charge relay system residues include Asp186 and His227. A glycan (N-linked (GlcNAc...) asparagine) is linked at Asn240. Ser401 serves as the catalytic Charge relay system. The P/Homo B domain maps to 476-616; it reads AVPSQHMCVA…SLILYGTAEH (141 aa). The short motif at 534–536 is the Cell attachment site element; sequence RGD. The segment at 621 to 656 is disordered; that stretch reads FSSHQSRSRMLELSVPEQEPLKAEGPPPQAETPEEE. FU repeat units follow at residues 660–707, 711–758, 762–806, 810–855, and 863–911; these read TGVC…GYFG, ARRC…GLYA, QRLC…GTYF, LIRC…GFYP, and HKVC…ETFC. The segment at 680–898 is CRM (Cys-rich motif); that stretch reads CLNCVHFSLG…GFTQLGTSCI (219 aa). Asn882 and Asn900 each carry an N-linked (GlcNAc...) asparagine glycan. The region spanning 899-937 is the PLAC domain; the sequence is TNHTCSNADETFCEMVKSNRLCERKLFIQFCCRTCLLAG.

It belongs to the peptidase S8 family. In terms of assembly, the precursor protein seems to exist in the reticulum endoplasmic as both a monomer and a dimer-sized complex whereas mature form exists only as a monomer, suggesting that propeptide cleavage affects its tertiary or quaternary structure. Interacts (immature form including the propeptide) with RCN3; probably involved in the maturation and the secretion of PCSK6. It depends on Ca(2+) as a cofactor. As to expression, high expression in the anterior pituitary and in several brain regions, the atrium, and the ventricle.

In terms of biological role, serine endoprotease that processes various proproteins by cleavage at paired basic amino acids, recognizing the RXXX[KR]R consensus motif. Likely functions in the constitutive secretory pathway, with unique restricted distribution in both neuroendocrine and non-neuroendocrine tissues. The protein is Proprotein convertase subtilisin/kexin type 6 (Pcsk6) of Rattus norvegicus (Rat).